We begin with the raw amino-acid sequence, 136 residues long: Large ribosomal subunit protein uL16c (136 aa).

Belongs to the universal ribosomal protein uL16 family. In terms of assembly, part of the 50S ribosomal subunit.

The protein localises to the plastid. It is found in the chloroplast. In Mesostigma viride (Green alga), this protein is Large ribosomal subunit protein uL16c.